The sequence spans 486 residues: MTHYIQGQWHAGKGHDVASINPANAQTIWTGKTATAEQVNAAVDAARAAQFDWFMLGFDARLAIVEAYRSQLEANKAELAETIAQETGKPQWETATEVGAMIGKIALSAAAYNKRTGTEANDTPAGRAVIRHKPHGVVAVFGPYNFPGHLPNGHIVPALLAGNTVIFKPSELTPKVAELMVSLWDKAGLPAGVLNLVQGEVDTGKALASHPQLDGLFFTGSSRTGHFLHQQYAGHPGKILALEMGGNNPLIIKGVQDIKAAVHDILQSAYISSGQRCTCARRLYVEQGEQGNALIAMLAAAVKQIKVGPWNAQPQPFMGSMISETAAKGMVAAQTNLQNLGGVSLVELTHLEAGTGLVSPGLIDVTAIDVLPDEEYFGPLLQLVRYSDFDQAIKLANQTRYGLSAGLLADSREDYDYFLARIRAGIVNWNKQITGASGAAPFGGVGASGNHRASAFYAADYCAYPVASVEADAVSLPATLSPGLSL.

Position 220 to 225 (220 to 225) interacts with NAD(+); it reads GSSRTG. Active-site residues include Glu243 and Cys277.

This sequence belongs to the aldehyde dehydrogenase family. AstD subfamily.

It catalyses the reaction N-succinyl-L-glutamate 5-semialdehyde + NAD(+) + H2O = N-succinyl-L-glutamate + NADH + 2 H(+). Its pathway is amino-acid degradation; L-arginine degradation via AST pathway; L-glutamate and succinate from L-arginine: step 4/5. In terms of biological role, catalyzes the NAD-dependent reduction of succinylglutamate semialdehyde into succinylglutamate. The polypeptide is N-succinylglutamate 5-semialdehyde dehydrogenase (Shewanella baltica (strain OS185)).